The following is a 382-amino-acid chain: Small ribosomal subunit protein mS35 (382 aa).

Residues 363 to 375 are compositionally biased toward gly residues; sequence GRGGKALPGGKGG. A disordered region spans residues 363 to 382; the sequence is GRGGKALPGGKGGKMQRSKR.

Belongs to the mitochondrion-specific ribosomal protein mS35 family. Component of the mitochondrial small ribosomal subunit (mt-SSU). Mature N.crassa 74S mitochondrial ribosomes consist of a small (37S) and a large (54S) subunit. The 37S small subunit contains a 16S ribosomal RNA (16S mt-rRNA) and 32 different proteins. The 54S large subunit contains a 23S rRNA (23S mt-rRNA) and 42 different proteins.

The protein resides in the mitochondrion. Functionally, component of the mitochondrial ribosome (mitoribosome), a dedicated translation machinery responsible for the synthesis of mitochondrial genome-encoded proteins, including at least some of the essential transmembrane subunits of the mitochondrial respiratory chain. The mitoribosomes are attached to the mitochondrial inner membrane and translation products are cotranslationally integrated into the membrane. The chain is Small ribosomal subunit protein mS35 (rsm24) from Neurospora crassa (strain ATCC 24698 / 74-OR23-1A / CBS 708.71 / DSM 1257 / FGSC 987).